A 550-amino-acid chain; its full sequence is Glucose-6-phosphate isomerase 1 (550 aa).

Glu-353 functions as the Proton donor in the catalytic mechanism. Residues His-384 and Lys-512 contribute to the active site.

This sequence belongs to the GPI family.

The protein resides in the cytoplasm. The enzyme catalyses alpha-D-glucose 6-phosphate = beta-D-fructose 6-phosphate. Its pathway is carbohydrate biosynthesis; gluconeogenesis. It participates in carbohydrate degradation; glycolysis; D-glyceraldehyde 3-phosphate and glycerone phosphate from D-glucose: step 2/4. Functionally, catalyzes the reversible isomerization of glucose-6-phosphate to fructose-6-phosphate. The chain is Glucose-6-phosphate isomerase 1 from Thiobacillus denitrificans (strain ATCC 25259 / T1).